A 213-amino-acid polypeptide reads, in one-letter code: GTP cyclohydrolase 1 (213 aa).

The Zn(2+) site is built by Cys-104, His-107, and Cys-175.

Belongs to the GTP cyclohydrolase I family. In terms of assembly, toroid-shaped homodecamer, composed of two pentamers of five dimers.

The catalysed reaction is GTP + H2O = 7,8-dihydroneopterin 3'-triphosphate + formate + H(+). Its pathway is cofactor biosynthesis; 7,8-dihydroneopterin triphosphate biosynthesis; 7,8-dihydroneopterin triphosphate from GTP: step 1/1. The sequence is that of GTP cyclohydrolase 1 from Brucella abortus (strain 2308).